A 410-amino-acid polypeptide reads, in one-letter code: Peptidase T (410 aa).

Histidine 79 lines the Zn(2+) pocket. Aspartate 81 is a catalytic residue. Aspartate 142 contacts Zn(2+). Catalysis depends on glutamate 176, which acts as the Proton acceptor. Residues glutamate 177, aspartate 199, and histidine 381 each contribute to the Zn(2+) site.

Belongs to the peptidase M20B family. Zn(2+) serves as cofactor.

The protein resides in the cytoplasm. The catalysed reaction is Release of the N-terminal residue from a tripeptide.. Cleaves the N-terminal amino acid of tripeptides. The protein is Peptidase T of Brevibacillus brevis (strain 47 / JCM 6285 / NBRC 100599).